The primary structure comprises 159 residues: Transcriptional repressor NrdR (159 aa).

Residues 3-34 fold into a zinc finger; it reads CPFCRHDDTQVVDSRVSEDGAAIRRRRRCSAC. Residues 49 to 139 form the ATP-cone domain; that stretch reads PFVVKKDGSR…VYRRFEDVSE (91 aa).

Belongs to the NrdR family. The cofactor is Zn(2+).

Its function is as follows. Negatively regulates transcription of bacterial ribonucleotide reductase nrd genes and operons by binding to NrdR-boxes. The chain is Transcriptional repressor NrdR from Burkholderia cenocepacia (strain ATCC BAA-245 / DSM 16553 / LMG 16656 / NCTC 13227 / J2315 / CF5610) (Burkholderia cepacia (strain J2315)).